A 67-amino-acid polypeptide reads, in one-letter code: Colostrum trypsin inhibitor (67 aa).

The BPTI/Kunitz inhibitor domain maps to 8–58 (CQLPQARGPCKAALLRYFYNSTSNACEPFTYGGCQGNNBNFETTEMCLRIC). Cystine bridges form between Cys8–Cys58, Cys17–Cys41, and Cys33–Cys54. Asn27 carries N-linked (GlcNAc...) asparagine glycosylation.

The protein localises to the secreted. The protein is Colostrum trypsin inhibitor of Bos taurus (Bovine).